A 107-amino-acid polypeptide reads, in one-letter code: DNA polymerase delta subunit 4 (107 aa).

Positions 1 to 16 (MGRKRLITDSYPVVKR) match the PCNA-interaction protein motif (PIP box) motif. The segment at 1 to 35 (MGRKRLITDSYPVVKRREGSAGHSKGELAPDLGEE) is disordered. The segment covering 15-28 (KRREGSAGHSKGEL) has biased composition (basic and acidic residues).

The protein belongs to the DNA polymerase delta subunit 4 family. In terms of assembly, component of the tetrameric DNA polymerase delta complex (Pol-delta4), which consists of POLD1/p125, POLD2/p50, POLD3/p66/p68 and POLD4/p12, with POLD1 bearing DNA polymerase and 3' to 5' proofreading exonuclease activities. Within this complex, directly interacts with POLD1 and POLD2. Directly interacts with PCNA, as do POLD1 and POLD3; this interaction stimulates Pol-delta4 polymerase activity. As POLD1 and POLD2, directly interacts with WRNIP1; this interaction stimulates DNA polymerase delta-mediated DNA synthesis, independently of the presence of PCNA, possibly by increasing initiation frequency. Upon genotoxic stress induced by DNA damaging agents or by replication stress, POLD4 is proteolytically degraded and Pol-delta4 is converted into a trimeric form of the complex (Pol-delta3) that has an increased proofreading activity. The DNA polymerase delta complex interacts with POLDIP2; this interaction is probably mediated through direct binding to POLD2. Post-translationally, ubiquitinated; undergoes 'Lys-48'-linked ubiquitination in response to UV irradiation, leading to proteasomal degradation. This modification is partly mediated by RNF8 and by the DCX(DTL) E3 ubiquitin ligase complex (also called CRL4(CDT2)). Efficient degradation requires the presence of PCNA and is required for the inhibition of fork progression after DNA damage.

It localises to the nucleus. Its function is as follows. As a component of the tetrameric DNA polymerase delta 4 complex (Pol-delta4), plays a role in high fidelity genome replication and repair. Within this complex, increases the rate of DNA synthesis and decreases fidelity by regulating POLD1 polymerase and proofreading 3' to 5' exonuclease activity. Pol-delta4 participates in Okazaki fragment processing, through both the short flap pathway, as well as a nick translation system. Under conditions of DNA replication stress, required for the repair of broken replication forks through break-induced replication (BIR), a mechanism that may induce segmental genomic duplications of up to 200 kb. Involved in Pol-delta4 translesion synthesis (TLS) of templates carrying O6-methylguanine or abasic sites. Its degradation in response to DNA damage is required for the inhibition of fork progression and cell survival. The protein is DNA polymerase delta subunit 4 (POLD4) of Bos taurus (Bovine).